Consider the following 180-residue polypeptide: ATP synthase subunit delta (180 aa).

It belongs to the ATPase delta chain family. In terms of assembly, F-type ATPases have 2 components, F(1) - the catalytic core - and F(0) - the membrane proton channel. F(1) has five subunits: alpha(3), beta(3), gamma(1), delta(1), epsilon(1). F(0) has three main subunits: a(1), b(2) and c(10-14). The alpha and beta chains form an alternating ring which encloses part of the gamma chain. F(1) is attached to F(0) by a central stalk formed by the gamma and epsilon chains, while a peripheral stalk is formed by the delta and b chains.

Its subcellular location is the cell membrane. F(1)F(0) ATP synthase produces ATP from ADP in the presence of a proton or sodium gradient. F-type ATPases consist of two structural domains, F(1) containing the extramembraneous catalytic core and F(0) containing the membrane proton channel, linked together by a central stalk and a peripheral stalk. During catalysis, ATP synthesis in the catalytic domain of F(1) is coupled via a rotary mechanism of the central stalk subunits to proton translocation. Functionally, this protein is part of the stalk that links CF(0) to CF(1). It either transmits conformational changes from CF(0) to CF(1) or is implicated in proton conduction. The protein is ATP synthase subunit delta of Latilactobacillus sakei subsp. sakei (strain 23K) (Lactobacillus sakei subsp. sakei).